The chain runs to 235 residues: Large ribosomal subunit protein uL1 (235 aa).

This sequence belongs to the universal ribosomal protein uL1 family. As to quaternary structure, part of the 50S ribosomal subunit.

In terms of biological role, binds directly to 23S rRNA. The L1 stalk is quite mobile in the ribosome, and is involved in E site tRNA release. Its function is as follows. Protein L1 is also a translational repressor protein, it controls the translation of the L11 operon by binding to its mRNA. In Nitratidesulfovibrio vulgaris (strain ATCC 29579 / DSM 644 / CCUG 34227 / NCIMB 8303 / VKM B-1760 / Hildenborough) (Desulfovibrio vulgaris), this protein is Large ribosomal subunit protein uL1.